The chain runs to 88 residues: Apolipoprotein C-I (88 aa).

The signal sequence occupies residues 1–26; sequence MRLFIALPVLIVVVAMTLEGPAPAQA.

Belongs to the apolipoprotein C1 family. Adult and fetal liver.

Its subcellular location is the secreted. Its function is as follows. Inhibitor of lipoprotein binding to the low density lipoprotein (LDL) receptor, LDL receptor-related protein, and very low density lipoprotein (VLDL) receptor. Associates with high density lipoproteins (HDL) and the triacylglycerol-rich lipoproteins in the plasma and makes up about 10% of the protein of the VLDL and 2% of that of HDL. Appears to interfere directly with fatty acid uptake and is also the major plasma inhibitor of cholesteryl ester transfer protein (CETP). Modulates the interaction of APOE with beta-migrating VLDL and inhibits binding of beta-VLDL to the LDL receptor-related protein. Binds free fatty acids and reduces their intracellular esterification. This chain is Apolipoprotein C-I (Apoc1), found in Mus musculus (Mouse).